The primary structure comprises 569 residues: Potassium-transporting ATPase potassium-binding subunit (569 aa).

10 consecutive transmembrane segments (helical) span residues Thr3–Gly23, Phe64–Val84, Phe133–Ile153, Ile179–Gly199, Ile255–Tyr275, Leu281–Val301, Phe375–Ile395, Ile421–Trp441, Leu497–Leu517, and Val535–Pro555.

It belongs to the KdpA family. The system is composed of three essential subunits: KdpA, KdpB and KdpC.

The protein localises to the cell inner membrane. Functionally, part of the high-affinity ATP-driven potassium transport (or Kdp) system, which catalyzes the hydrolysis of ATP coupled with the electrogenic transport of potassium into the cytoplasm. This subunit binds the periplasmic potassium ions and delivers the ions to the membrane domain of KdpB through an intramembrane tunnel. This is Potassium-transporting ATPase potassium-binding subunit from Parabacteroides distasonis (strain ATCC 8503 / DSM 20701 / CIP 104284 / JCM 5825 / NCTC 11152).